Reading from the N-terminus, the 389-residue chain is Xylose isomerase (389 aa).

Active-site residues include H54 and D57. Residues E181, E217, H220, D245, D255, D257, and D287 each contribute to the Mg(2+) site.

It belongs to the xylose isomerase family. In terms of assembly, homotetramer. Mg(2+) serves as cofactor.

Its subcellular location is the cytoplasm. The enzyme catalyses alpha-D-xylose = alpha-D-xylulofuranose. Functionally, involved in D-xylose catabolism. The polypeptide is Xylose isomerase (xylA) (Streptomyces violaceusniger).